Consider the following 92-residue polypeptide: Non-specific lipid-transfer protein A (92 aa).

4 disulfide bridges follow: C3–C51, C13–C28, C29–C74, and C49–C88.

Belongs to the plant LTP family.

In terms of biological role, plant non-specific lipid-transfer proteins transfer phospholipids as well as galactolipids across membranes. May play a role in wax or cutin deposition in the cell walls of expanding epidermal cells and certain secretory tissues. This chain is Non-specific lipid-transfer protein A, found in Ricinus communis (Castor bean).